The chain runs to 506 residues: U3 small nucleolar RNA-associated protein 18 homolog (506 aa).

Residues 1-11 show a composition bias toward acidic residues; it reads MSSDESSDGLE. Disordered regions lie at residues 1-44 and 69-126; these read MSSD…SQAK and AKSV…PLNH. Over residues 24–37 the composition is skewed to basic and acidic residues; the sequence is EQEKPAKIKRERYI. Residues Ser-102, Ser-104, Ser-164, and Ser-165 each carry the phosphoserine modification. 4 WD repeats span residues 203–242, 331–370, 372–413, and 469–505; these read YAEG…NERL, KQEG…IEHI, MDDG…ASKA, and EKVG…YFKG.

The protein belongs to the WD repeat UTP18 family. In terms of assembly, component of U3 snoRNP complex.

The protein localises to the nucleus. It is found in the nucleolus. Component of a nucleolar small nuclear ribonucleoprotein particle (snoRNP) thought to participate in the processing and modification of pre-ribosomal RNA. Regulation of cell size by ribosome synthesis is an important parameter for stem cell maintenance and function. The sequence is that of U3 small nucleolar RNA-associated protein 18 homolog (wcd) from Drosophila melanogaster (Fruit fly).